Here is a 222-residue protein sequence, read N- to C-terminus: uncharacterized protein (222 aa).

This is an uncharacterized protein from Klebsiella pneumoniae.